The chain runs to 232 residues: MDKEELKRRAAARALEEVRGGMKLGLGTGSTAKHFVELLGERVRLGLEIIGVPTSEVTRADAERCGIRLTSLDEIDRLDITIDGADEVDHHLDLIKGGGGALLREKIVAAASDRMIVIADESKLVDTLGRFPLPIEVIPFGLGATRRALQNAFTAAGCDGELKLRPGKDGHAFVTDGGHWILDAQLGRIPDAPRLAQLLSVIPGVVEHGLFVGMASTVVLAGADGIRTIERA.

Substrate is bound by residues 28 to 31 (TGST), 83 to 86 (DGAD), and 96 to 99 (KGGG). The active-site Proton acceptor is the E105. Position 123 (K123) interacts with substrate.

It belongs to the ribose 5-phosphate isomerase family. Homodimer.

It carries out the reaction aldehydo-D-ribose 5-phosphate = D-ribulose 5-phosphate. The protein operates within carbohydrate degradation; pentose phosphate pathway; D-ribose 5-phosphate from D-ribulose 5-phosphate (non-oxidative stage): step 1/1. Its function is as follows. Catalyzes the reversible conversion of ribose-5-phosphate to ribulose 5-phosphate. The sequence is that of Ribose-5-phosphate isomerase A from Rhodopseudomonas palustris (strain ATCC BAA-98 / CGA009).